The primary structure comprises 91 residues: Small ribosomal subunit protein uS19 (91 aa).

Belongs to the universal ribosomal protein uS19 family.

Its function is as follows. Protein S19 forms a complex with S13 that binds strongly to the 16S ribosomal RNA. The sequence is that of Small ribosomal subunit protein uS19 from Metamycoplasma hominis (strain ATCC 23114 / DSM 25592 / NBRC 14850 / NCTC 10111 / PG21) (Mycoplasma hominis).